The sequence spans 295 residues: Bifunctional protein FolD (295 aa).

Residues Gly166 to Ser168, Ser191, and Ile232 contribute to the NADP(+) site.

This sequence belongs to the tetrahydrofolate dehydrogenase/cyclohydrolase family. In terms of assembly, homodimer.

It catalyses the reaction (6R)-5,10-methylene-5,6,7,8-tetrahydrofolate + NADP(+) = (6R)-5,10-methenyltetrahydrofolate + NADPH. The catalysed reaction is (6R)-5,10-methenyltetrahydrofolate + H2O = (6R)-10-formyltetrahydrofolate + H(+). It functions in the pathway one-carbon metabolism; tetrahydrofolate interconversion. Catalyzes the oxidation of 5,10-methylenetetrahydrofolate to 5,10-methenyltetrahydrofolate and then the hydrolysis of 5,10-methenyltetrahydrofolate to 10-formyltetrahydrofolate. The protein is Bifunctional protein FolD of Rhodopseudomonas palustris (strain BisB18).